The following is a 455-amino-acid chain: Tubby-like F-box protein 1 (455 aa).

Residues 54-112 enclose the F-box domain; it reads ETPWANLPPELLRDVIKRLEESESVWPARRHVVACASVCRSWRDMCKEIVQSPELSGKI. The tract at residues 386 to 414 is disordered; that stretch reads QPQPQPQPQPQPQPLTQPQPSGQTDGPDK. Pro residues predominate over residues 388–402; that stretch reads QPQPQPQPQPQPLTQ.

The protein belongs to the TUB family. In terms of tissue distribution, ubiquitous.

The polypeptide is Tubby-like F-box protein 1 (Arabidopsis thaliana (Mouse-ear cress)).